The primary structure comprises 703 residues: Polyribonucleotide nucleotidyltransferase (703 aa).

Mg(2+)-binding residues include aspartate 484 and aspartate 490. One can recognise a KH domain in the interval 551-610 (PQMIRMQIDPDKIREVIGPGGKTIHKIVDETGCKIDIEDDGSLFIMATDEEAAKKARFFV). The region spanning 620–694 (GKTYMGTVKR…RQGRVNLSRK (75 aa)) is the S1 motif domain.

Belongs to the polyribonucleotide nucleotidyltransferase family. Mg(2+) is required as a cofactor.

The protein resides in the cytoplasm. It catalyses the reaction RNA(n+1) + phosphate = RNA(n) + a ribonucleoside 5'-diphosphate. Functionally, involved in mRNA degradation. Catalyzes the phosphorolysis of single-stranded polyribonucleotides processively in the 3'- to 5'-direction. The sequence is that of Polyribonucleotide nucleotidyltransferase from Syntrophomonas wolfei subsp. wolfei (strain DSM 2245B / Goettingen).